The following is a 402-amino-acid chain: Major outer membrane porin (402 aa).

Residues 1 to 22 form the signal peptide; it reads MKKLLKSALLFAATGSALSLQA.

It belongs to the chlamydial porin (CP) (TC 1.B.2) family. As to quaternary structure, part of a disulfide cross-linked outer membrane complex (COMC) composed of the major outer membrane porin (MOMP), the small cysteine-rich protein (OmcA) and the large cysteine-rich periplasmic protein (OmcB).

The protein localises to the cell outer membrane. Functionally, in elementary bodies (EBs, the infectious stage, which is able to survive outside the host cell) provides the structural integrity of the outer envelope through disulfide cross-links with the small cysteine-rich protein and the large cysteine-rich periplasmic protein. It has been described in publications as the Sarkosyl-insoluble COMC (Chlamydia outer membrane complex), and serves as the functional equivalent of peptidoglycan. It is present but some of the disulfide bonds are reduced in reticulate bodies (RBs). In terms of biological role, permits diffusion of specific solutes through the outer membrane. The sequence is that of Major outer membrane porin (ompA) from Chlamydophila psittaci (strain ATCC VR-125 / 6BC) (Chlamydia psittaci).